The chain runs to 319 residues: Fiber protein (319 aa).

2 Shaft repeats span residues 44-73 and 82-103; these read GVLS…TVDT and IKVN…GNGL.

Belongs to the adenoviridae fiber family. In terms of assembly, homotrimer. Interacts with host receptor CD46. Interacts (via N-terminal tail region) with pentons.

It localises to the virion. The protein resides in the host nucleus. Functionally, forms spikes that protrude from each vertex of the icosahedral capsid. Interacts with host receptor CD46 to provide virion initial attachment to target cell. Fiber proteins are shed during virus entry, when virus is still at the cell surface. Heparan sulfate might also play a role in virus binding. The protein is Fiber protein of Homo sapiens (Human).